Reading from the N-terminus, the 208-residue chain is Ubiquitin-conjugating enzyme E2 S (208 aa).

Residues Q14–Q160 form the UBC core domain. C98 acts as the Glycyl thioester intermediate in catalysis. A disordered region spans residues P161 to K196. Over residues D170 to K196 the composition is skewed to basic and acidic residues.

This sequence belongs to the ubiquitin-conjugating enzyme family.

It carries out the reaction S-ubiquitinyl-[E1 ubiquitin-activating enzyme]-L-cysteine + [E2 ubiquitin-conjugating enzyme]-L-cysteine = [E1 ubiquitin-activating enzyme]-L-cysteine + S-ubiquitinyl-[E2 ubiquitin-conjugating enzyme]-L-cysteine.. It participates in protein modification; protein ubiquitination. In terms of biological role, catalyzes the covalent attachment of ubiquitin to other proteins. Acts as an essential factor of the anaphase promoting complex/cyclosome (APC/C), a cell cycle-regulated ubiquitin ligase that controls progression through mitosis. Acts by specifically elongating polyubiquitin chains initiated by the E2 enzyme vih/UbcH10 on APC/C substrates, enhancing the degradation of APC/C substrates by the proteasome and promoting mitotic exit. The sequence is that of Ubiquitin-conjugating enzyme E2 S from Drosophila grimshawi (Hawaiian fruit fly).